We begin with the raw amino-acid sequence, 872 residues long: uncharacterized protein (872 aa).

The stretch at 496 to 524 (LQQHHQDISAMQQQILEEKNQLRRATIDV) forms a coiled coil. Disordered regions lie at residues 595–736 (RPAV…SVQQ) and 844–872 (TKENISVNPRDASKAPKSRFQRTKPPQAV). 2 stretches are compositionally biased toward polar residues: residues 615–659 (QNGN…QTTF) and 670–686 (PYASRATSNGLSPNNVV). Over residues 687 to 736 (QQYQSYYDNPSNQQSNQQSNQQSNQQPNQQPNQQPNQQPNQQPNQQSVQQ) the composition is skewed to low complexity.

It localises to the virion. This is an uncharacterized protein from Acanthamoeba polyphaga mimivirus (APMV).